A 965-amino-acid polypeptide reads, in one-letter code: Iron-responsive element-binding protein 2 (965 aa).

Positions 142–170 (NAPNPGGGEAQKPTAKLSPLKGQPRKLPC) are disordered. 3 residues coordinate [4Fe-4S] cluster: Cys-514, Cys-580, and Cys-583.

Belongs to the aconitase/IPM isomerase family. It depends on [4Fe-4S] cluster as a cofactor. Post-translationally, ubiquitinated and degraded by the proteasome in presence of high level of iron and oxygen.

It is found in the cytoplasm. In terms of biological role, RNA-binding protein that binds to iron-responsive elements (IRES), which are stem-loop structures found in the 5'-UTR of ferritin, and delta aminolevulinic acid synthase mRNAs, and in the 3'-UTR of transferrin receptor mRNA. Binding to the IRE element in ferritin results in the repression of its mRNA translation. Binding of the protein to the transferrin receptor mRNA inhibits the degradation of this otherwise rapidly degraded mRNA. In Gallus gallus (Chicken), this protein is Iron-responsive element-binding protein 2 (IREB2).